We begin with the raw amino-acid sequence, 494 residues long: Guanosine-5'-triphosphate,3'-diphosphate pyrophosphatase (494 aa).

It belongs to the GppA/Ppx family. GppA subfamily.

It carries out the reaction guanosine 3'-diphosphate 5'-triphosphate + H2O = guanosine 3',5'-bis(diphosphate) + phosphate + H(+). It functions in the pathway purine metabolism; ppGpp biosynthesis; ppGpp from GTP: step 2/2. Catalyzes the conversion of pppGpp to ppGpp. Guanosine pentaphosphate (pppGpp) is a cytoplasmic signaling molecule which together with ppGpp controls the 'stringent response', an adaptive process that allows bacteria to respond to amino acid starvation, resulting in the coordinated regulation of numerous cellular activities. In Escherichia coli O157:H7, this protein is Guanosine-5'-triphosphate,3'-diphosphate pyrophosphatase.